Reading from the N-terminus, the 247-residue chain is Myelin-oligodendrocyte glycoprotein (247 aa).

Positions 1–29 are cleaved as a signal peptide; it reads MASLSRPSLPSCLCSFLLLLLLQVSSSYA. The Extracellular segment spans residues 30-154; that stretch reads GQFRVIGPRH…EDPFYWVSPG (125 aa). The 114-residue stretch at 32–145 folds into the Ig-like V-type domain; that stretch reads FRVIGPRHPI…EEAAMELKVE (114 aa). Cysteines 53 and 127 form a disulfide. N-linked (GlcNAc...) asparagine glycosylation occurs at Asn60. The helical transmembrane segment at 155–175 threads the bilayer; that stretch reads VLVLLAVLPVLLLQITVGLIF. At 176–210 the chain is on the cytoplasmic side; the sequence is LCLQYRLRGKLRAEIENLHRTFDPHFLRVPCWKIT. The helical transmembrane segment at 211–231 threads the bilayer; the sequence is LFVIVPVLGPLVALIICYNWL. Residues 232 to 247 are Extracellular-facing; the sequence is HRRLAGQFLEELRNPF.

It belongs to the immunoglobulin superfamily. BTN/MOG family. Homodimer. May form heterodimers between the different isoforms. As to quaternary structure, (Microbial infection) Interacts with rubella virus E2 glycoprotein. As to expression, found exclusively in the CNS, where it is localized on the surface of myelin and oligodendrocyte cytoplasmic membranes.

It is found in the cell membrane. In terms of biological role, mediates homophilic cell-cell adhesion. Minor component of the myelin sheath. May be involved in completion and/or maintenance of the myelin sheath and in cell-cell communication. (Microbial infection) Acts as a receptor for rubella virus. This is Myelin-oligodendrocyte glycoprotein (MOG) from Homo sapiens (Human).